The chain runs to 297 residues: Golgi-associated RAB2 interactor protein 1A (297 aa).

Positions 226 to 257 (SNRHQTSRDRHTDTATETDNSGNCKSTPLVAS) are disordered. Residues 240-257 (ATETDNSGNCKSTPLVAS) show a composition bias toward polar residues.

It belongs to the GARIN family. In terms of assembly, interacts (via N-terminus) with RAB2B (in GTP-bound form). As to expression, expressed in testis (at protein level).

Its subcellular location is the golgi apparatus. Functionally, RAB2B effector protein required for accurate acrosome formation and normal male fertility. This chain is Golgi-associated RAB2 interactor protein 1A, found in Mus musculus (Mouse).